We begin with the raw amino-acid sequence, 305 residues long: MSTLRIATRKSPLALWQAEHVAQQLKQHYPELTVELVPIVTQGDILAHTPLSKIGGKNLFIKELEIAMQQNAADIAVHSMKDVGVTLPEGFVLAAILPRENPFDALVSNHYAHLNELPNGARVGTCSLRRKMQLAHYRPDLKLIDIRGNVHTRLQKLDSGAFDALILACAGLIRLQQNARIRQILPAEISLPAIGQGAIGVECRADSPFLAHIQTLNHFETAVCVQTERVVNQRLQGDCQVPIAVFATLSGKTMTLQSRIGTIDGQRMLAHQEICALEDAEKAGARCAEALIQQGAQDILHEYRK.

Residue Cys239 is modified to S-(dipyrrolylmethanemethyl)cysteine.

Belongs to the HMBS family. As to quaternary structure, monomer. Requires dipyrromethane as cofactor.

The enzyme catalyses 4 porphobilinogen + H2O = hydroxymethylbilane + 4 NH4(+). Its pathway is porphyrin-containing compound metabolism; protoporphyrin-IX biosynthesis; coproporphyrinogen-III from 5-aminolevulinate: step 2/4. Its function is as follows. Tetrapolymerization of the monopyrrole PBG into the hydroxymethylbilane pre-uroporphyrinogen in several discrete steps. The polypeptide is Porphobilinogen deaminase (Dichelobacter nodosus (strain VCS1703A)).